The sequence spans 143 residues: Large ribosomal subunit protein uL11 (143 aa).

The protein belongs to the universal ribosomal protein uL11 family. Part of the ribosomal stalk of the 50S ribosomal subunit. Interacts with L10 and the large rRNA to form the base of the stalk. L10 forms an elongated spine to which L12 dimers bind in a sequential fashion forming a multimeric L10(L12)X complex. Post-translationally, one or more lysine residues are methylated.

Forms part of the ribosomal stalk which helps the ribosome interact with GTP-bound translation factors. This Marinobacter nauticus (strain ATCC 700491 / DSM 11845 / VT8) (Marinobacter aquaeolei) protein is Large ribosomal subunit protein uL11.